A 156-amino-acid polypeptide reads, in one-letter code: Myosin regulatory light chain, striated adductor muscle (156 aa).

A Blocked amino end (Ala) modification is found at Ala1. EF-hand domains lie at 15–50 (KQIQ…LGRT) and 84–119 (DTEE…MGDN). Ca(2+) is bound by residues Asp28, Asp30, Asp32, and Asp39.

In terms of biological role, in molluscan muscle, calcium regulation is associated with myosin rather than with actin. Muscle myosin contains two types of light chains: the catalytic light chain, essential for ATPase activity, and the regulatory light chain, a calcium-binding protein responsible for Ca(2+) dependent binding and Ca(2+) dependent Mg-ATPase activity. The polypeptide is Myosin regulatory light chain, striated adductor muscle (Mizuhopecten yessoensis (Japanese scallop)).